The chain runs to 4011 residues: Hybrid PKS-NRPS synthetase mycA (4011 aa).

The 440-residue stretch at 12–451 (NEPIAIIGSA…GANAHVILEN (440 aa)) folds into the Ketosynthase family 3 (KS3) domain. Catalysis depends on for beta-ketoacyl synthase activity residues cysteine 185, histidine 324, and histidine 373. The tract at residues 576–903 (VFTGQGAQWA…PYTGTLSRGS (328 aa)) is acyl transferase (AT) domain. Positions 977-1113 (NPLLGRRIPD…GRVIVTLAGT (137 aa)) are N-terminal hotdog fold. A PKS/mFAS DH domain is found at 977–1290 (NPLLGRRIPD…ITPLATRTGQ (314 aa)). The dehydratase (DH) domain stretch occupies residues 978-1287 (PLLGRRIPDG…GVRITPLATR (310 aa)). The active-site Proton acceptor; for dehydratase activity is the histidine 1009. The interval 1135-1290 (TAEVREDEFY…ITPLATRTGQ (156 aa)) is C-terminal hotdog fold. The active-site Proton donor; for dehydratase activity is the aspartate 1195. The methyltransferase (MT) domain stretch occupies residues 1434 to 1626 (YYVEALGIRE…FSGIDTITPE (193 aa)). A ketoreductase (KR)domain region spans residues 2138–2311 (TYVLFGLTSD…AASVLHLGAV (174 aa)). Residues 2429-2504 (DSFLQKLQIM…DLVAFAHEKL (76 aa)) form the Carrier 1 domain. Serine 2464 carries the post-translational modification O-(pantetheine 4'-phosphoryl)serine. The disordered stretch occupies residues 2519-2607 (AAAAAAAERS…PREQDVERTA (89 aa)). Polar residues predominate over residues 2559–2578 (PASSSTGSDHPTSVTSSGHT). The tract at residues 2604–2975 (ERTAPMSLGQ…KPDSTLGSAP (372 aa)) is condensation. Residues 3009-3414 (IIQRNPDTIA…GELEILGRID (406 aa)) form an adenylation region. The segment at 3525-3544 (AKEEEEEKRPNGSSAAPLTQ) is disordered. The segment covering 3535-3544 (NGSSAAPLTQ) has biased composition (polar residues). The 81-residue stretch at 3541 to 3621 (PLTQQELQLR…AMAAAVHDAA (81 aa)) folds into the Carrier 2 domain. Position 3581 is an O-(pantetheine 4'-phosphoryl)serine (serine 3581). The interval 3671–3978 (VVILTGATGF…RTVPLGQWIE (308 aa)) is reductase-like.

The protein in the C-terminal section; belongs to the NRP synthetase family.

The catalysed reaction is L-leucine + 8 malonyl-CoA + 4 S-adenosyl-L-methionine + ATP + 9 NADPH + 12 H(+) = (5S)-5-(2-methylpropyl)-3-[(2E,6R,8E,10E,12E)-6,8,10,12-tetramethyltetradeca-2,8,10,12-tetraenoyl]-2,5-dihydro-1H-pyrrol-2-one + AMP + 4 S-adenosyl-L-homocysteine + 8 CO2 + diphosphate + 9 NADP(+) + 8 CoA + 7 H2O. It functions in the pathway mycotoxin biosynthesis. Functionally, hybrid PKS-NRPS synthetase; part of the gene cluster that mediates the biosynthesis of myceliothermophins, mycotoxins that contain a trans-fused decalin ring system connected to a conjugated 3-pyrrolin-2-one moiety and that have potential anti-tumor properties. The polyketide synthase module (PKS) of the PKS-NRPS mycA is responsible for the synthesis of the octaketide backbone. The downstream nonribosomal peptide synthetase (NRPS) module then amidates the carboxyl end of the octaketide with a leucine. A reductase-like domain (R) at the C-terminus catalyzes the reductive release of the polyketide-amino acid intermediate. Because mycA lacks a designated enoylreductase (ER) domain, the required activity is provided the enoyl reductase mycC. Following mycA-catalyzed construction and release of aminoacyl polyketide aldehyde, Knoevenagel condensation yields the expected ketone. This C18 keto acyclic precursor is the substrate of the Diels-Alderase mycB, that catalyzes the Diels-Alder cycloaddition to produce myceliothermophin E. A yet unknown oxygenase involved in the production of myceliothermophin A, via substitution with a hydroxyl group at the C21, has still to be identified. The chain is Hybrid PKS-NRPS synthetase mycA from Thermothelomyces thermophilus (strain ATCC 42464 / BCRC 31852 / DSM 1799) (Sporotrichum thermophile).